Here is a 520-residue protein sequence, read N- to C-terminus: Amine oxidase [flavin-containing] B (520 aa).

Ser-2 is modified (N-acetylserine). Residues 2–489 lie on the Cytoplasmic side of the membrane; it reads SGKCDVVVVG…TFLERHLPSV (488 aa). An N6-acetyllysine modification is found at Lys-52. S-8alpha-FAD cysteine is present on Cys-397. Residues 490–516 traverse the membrane as a helical; Anchor for type IV membrane protein segment; the sequence is PGLLRLIGLTAIFSATALGVLAHKRGL. Topologically, residues 517–520 are mitochondrial intermembrane; the sequence is LVRV.

It belongs to the flavin monoamine oxidase family. Monomer, homo- or heterodimer (containing two subunits of similar size). Each subunit contains a covalently bound flavin. Enzymatically active as monomer. The cofactor is FAD.

Its subcellular location is the mitochondrion outer membrane. It carries out the reaction a secondary aliphatic amine + O2 + H2O = a primary amine + an aldehyde + H2O2. The enzyme catalyses (R)-adrenaline + O2 + H2O = (R)-3,4-dihydroxymandelaldehyde + methylamine + H2O2. It catalyses the reaction a primary methyl amine + O2 + H2O = an aldehyde + H2O2 + NH4(+). The catalysed reaction is benzylamine + O2 + H2O = benzaldehyde + H2O2 + NH4(+). It carries out the reaction dopamine + O2 + H2O = 3,4-dihydroxyphenylacetaldehyde + H2O2 + NH4(+). The enzyme catalyses tyramine + O2 + H2O = (4-hydroxyphenyl)acetaldehyde + H2O2 + NH4(+). It catalyses the reaction (R)-noradrenaline + O2 + H2O = (R)-3,4-dihydroxymandelaldehyde + H2O2 + NH4(+). The catalysed reaction is 2-phenylethylamine + O2 + H2O = 2-phenylacetaldehyde + H2O2 + NH4(+). It carries out the reaction N-acetylputrescine + O2 + H2O = 4-acetamidobutanal + H2O2 + NH4(+). Its function is as follows. Catalyzes the oxidative deamination of primary and some secondary amines such as neurotransmitters, and exogenous amines including the tertiary amine, neurotoxin 1-methyl-4-phenyl-1,2,3,6-tetrahydropyridine (MPTP), with concomitant reduction of oxygen to hydrogen peroxide and participates in the metabolism of neuroactive and vasoactive amines in the central nervous system and peripheral tissues. Preferentially degrades benzylamine and phenylethylamine. In Canis lupus familiaris (Dog), this protein is Amine oxidase [flavin-containing] B.